The sequence spans 74 residues: High-potential iron-sulfur protein isozyme 2 (74 aa).

Residues Cys36, Cys39, Cys53, and Cys67 each contribute to the [4Fe-4S] cluster site.

As to quaternary structure, homodimer.

In terms of biological role, specific class of high-redox-potential 4Fe-4S ferredoxins. Functions in anaerobic electron transport in most purple and in some other photosynthetic bacteria and in at least one genus (Paracoccus) of halophilic, denitrifying bacteria. In Ectothiorhodospira mobilis, this protein is High-potential iron-sulfur protein isozyme 2.